A 148-amino-acid polypeptide reads, in one-letter code: Nucleoside diphosphate kinase 1 (148 aa).

ATP-binding residues include K9, F57, R85, T91, R102, and N112. H115 serves as the catalytic Pros-phosphohistidine intermediate.

It belongs to the NDK family. Mg(2+) is required as a cofactor. Post-translationally, the N-terminus is blocked.

It carries out the reaction a 2'-deoxyribonucleoside 5'-diphosphate + ATP = a 2'-deoxyribonucleoside 5'-triphosphate + ADP. The enzyme catalyses a ribonucleoside 5'-diphosphate + ATP = a ribonucleoside 5'-triphosphate + ADP. Major role in the synthesis of nucleoside triphosphates other than ATP. The ATP gamma phosphate is transferred to the NDP beta phosphate via a ping-pong mechanism, using a phosphorylated active-site intermediate. This is Nucleoside diphosphate kinase 1 (NDPK1) from Spinacia oleracea (Spinach).